A 932-amino-acid polypeptide reads, in one-letter code: Protocadherin gamma-A8 (932 aa).

Positions 1-29 (MAAPQSRPRRGELILLCALLGTLWEIGRG) are cleaved as a signal peptide. Cadherin domains are found at residues 30–133 (QIRY…NPKF), 134–242 (QVED…APVF), 243–347 (PHPI…RPEV), 348–452 (IITS…PPTF), 453–562 (PHAS…APEI), and 570–682 (DGST…KPSV). Residues 30–692 (QIRYSVPEET…DPNDSSLTLY (663 aa)) are Extracellular-facing. A glycan (N-linked (GlcNAc...) asparagine) is linked at N47. N414, N419, and N545 each carry an N-linked (GlcNAc...) asparagine glycan. Residue N685 is glycosylated (N-linked (GlcNAc...) asparagine). Residues 693–713 (LVVAVAAISCVFLAFVAVLLG) form a helical membrane-spanning segment. Residues 714–932 (LRLRRWHKSH…KKKSGKKEKK (219 aa)) are Cytoplasmic-facing. Disordered regions lie at residues 804 to 841 (ADHG…WPNN) and 902 to 932 (ATLT…KEKK). Positions 810 to 841 (APPNTDWRFSQAQRPGTSGSQNGDDTGTWPNN) are enriched in polar residues. Residues 922–932 (NKKKSGKKEKK) are compositionally biased toward basic residues.

The protein resides in the cell membrane. In terms of biological role, potential calcium-dependent cell-adhesion protein. May be involved in the establishment and maintenance of specific neuronal connections in the brain. This Pan troglodytes (Chimpanzee) protein is Protocadherin gamma-A8 (PCDHGA8).